Here is a 395-residue protein sequence, read N- to C-terminus: Phosphoprotein (395 aa).

The span at 143–157 (FSSGPSLTDQASSKD) shows a compositional bias: polar residues. A disordered region spans residues 143–183 (FSSGPSLTDQASSKDPNFKRGGEKLTDATKADIGGSGASPG). Residues 158–172 (PNFKRGGEKLTDATK) show a composition bias toward basic and acidic residues. Positions 220 to 283 (ENVKEIIEIL…MTTMKIMDPS (64 aa)) are multimerization.

The protein belongs to the rubulavirus/avulavirus P protein family. In terms of assembly, homotetramer. Interacts (via multimerization domain) with polymerase L; this interaction forms the polymerase L-P complex. Interacts (via N-terminus) with N0 (via Ncore); this interaction allows P to chaperon N0 to avoid N polymerization before encapsidation. Interacts (via C-terminus) with N-RNA template; this interaction positions the polymerase on the template for both transcription and replication.

Essential cofactor of the RNA polymerase L that plays a central role in the transcription and replication by forming the polymerase complex with RNA polymerase L and recruiting L to the genomic N-RNA template for RNA synthesis. Also plays a central role in the encapsidation of nascent RNA chains by forming the encapsidation complex with the nucleocapsid protein N (N-P complex). Acts as a chaperone for newly synthesized free N protein, so-called N0, allowing encapsidation of nascent RNA chains during replication. The nucleoprotein protein N prevents excessive phosphorylation of P, which leads to down-regulation of viral transcription/ replication. Participates, together with N, in the formation of viral factories (viroplasms), which are large inclusions in the host cytoplasm where replication takes place. This Simian virus 41 (SV41) protein is Phosphoprotein (P/V).